We begin with the raw amino-acid sequence, 41 residues long: Large ribosomal subunit protein bL36 (41 aa).

This sequence belongs to the bacterial ribosomal protein bL36 family.

This Phenylobacterium zucineum (strain HLK1) protein is Large ribosomal subunit protein bL36.